Reading from the N-terminus, the 98-residue chain is Derivative of benzaldehyde biosynthesis cluster protein C (98 aa).

It belongs to the YciI family.

It functions in the pathway secondary metabolite biosynthesis. In terms of biological role, part of the gene cluster that mediates the biosynthesis of the antibiotic 2,4-dihydroxy-3-methyl-6-(2-oxopropyl)benzaldehyde (DHMBA) and its derivatives. The direct non-reducing polyketide synthase dbaI product is 2,4-dihydroxy-3-methyl-6-(2-oxopropyl)benzaldehyde (DHMBA), produced by condensation of one acetyl-CoA starter unit with 4 malonyl-CoA units and one methylation step. The FAD-dependent monooxygenase dbaH is responsible for the synthesis of yellow pigments derived from the oxidation of DHMBA. The roles of dbaB, C, E and F have still to be determined. This is Derivative of benzaldehyde biosynthesis cluster protein C from Emericella nidulans (strain FGSC A4 / ATCC 38163 / CBS 112.46 / NRRL 194 / M139) (Aspergillus nidulans).